A 435-amino-acid chain; its full sequence is AP-2 complex subunit mu (435 aa).

The residue at position 45 (Ser-45) is a Phosphoserine. At Thr-156 the chain carries Phosphothreonine. An MHD domain is found at 170–434 (RNELFLDVLE…IGRSGIYETR (265 aa)). 3 residues coordinate a 1,2-diacyl-sn-glycero-3-phospho-(1D-myo-inositol-3,4,5-trisphosphate): Lys-341, Lys-345, and Lys-354.

This sequence belongs to the adaptor complexes medium subunit family. Adaptor protein complex 2 (AP-2) is a heterotetramer composed of two large adaptins (alpha-type subunit AP2A1 or AP2A2 and beta-type subunit AP2B1), a medium adaptin (mu-type subunit AP2M1) and a small adaptin (sigma-type subunit AP2S1). Interacts with ATP6V1H and MEGF10. Interacts with EGFR. Interacts with PIP5K1C; tyrosine phosphorylation of PIP5K1C weakens the interaction. Interacts with KIAA0319; required for clathrin-mediated endocytosis of KIAA0319. Interacts with DVL2 (via DEP domain). Interacts with KCNQ1; mediates estrogen-induced internalization via clathrin-coated vesicles. Together with AP2A1 or AP2A2 and AP2B1, it interacts with ADAM10; this interaction facilitates ADAM10 endocytosis from the plasma membrane during long-term potentiation in hippocampal neurons. Probably interacts with ACE2 (via endocytic sorting signal motif); the interaction is inhibited by ACE2 phosphorylation. Interacts with RALBP1; the interaction is direct. Interacts with TMEM106B (via N-terminus). In terms of processing, phosphorylation at Thr-156 increases the affinity of the AP-2 complex for cargo membrane proteins during the initial stages of endocytosis.

The protein localises to the cell membrane. It is found in the membrane. Its subcellular location is the coated pit. Component of the adaptor protein complex 2 (AP-2). Adaptor protein complexes function in protein transport via transport vesicles in different membrane traffic pathways. Adaptor protein complexes are vesicle coat components and appear to be involved in cargo selection and vesicle formation. AP-2 is involved in clathrin-dependent endocytosis in which cargo proteins are incorporated into vesicles surrounded by clathrin (clathrin-coated vesicles, CCVs) which are destined for fusion with the early endosome. The clathrin lattice serves as a mechanical scaffold but is itself unable to bind directly to membrane components. Clathrin-associated adaptor protein (AP) complexes which can bind directly to both the clathrin lattice and to the lipid and protein components of membranes are considered to be the major clathrin adaptors contributing the CCV formation. AP-2 also serves as a cargo receptor to selectively sort the membrane proteins involved in receptor-mediated endocytosis. AP-2 seems to play a role in the recycling of synaptic vesicle membranes from the presynaptic surface. AP-2 recognizes Y-X-X-[FILMV] (Y-X-X-Phi) and [ED]-X-X-X-L-[LI] endocytosis signal motifs within the cytosolic tails of transmembrane cargo molecules. AP-2 may also play a role in maintaining normal post-endocytic trafficking through the ARF6-regulated, non-clathrin pathway. During long-term potentiation in hippocampal neurons, AP-2 is responsible for the endocytosis of ADAM10. The AP-2 mu subunit binds to transmembrane cargo proteins; it recognizes the Y-X-X-Phi motifs. The surface region interacting with to the Y-X-X-Phi motif is inaccessible in cytosolic AP-2, but becomes accessible through a conformational change following phosphorylation of AP-2 mu subunit at Thr-156 in membrane-associated AP-2. The membrane-specific phosphorylation event appears to involve assembled clathrin which activates the AP-2 mu kinase AAK1. Plays a role in endocytosis of frizzled family members upon Wnt signaling. This is AP-2 complex subunit mu (AP2M1) from Pongo abelii (Sumatran orangutan).